The following is a 304-amino-acid chain: tRNA pseudouridine synthase B (304 aa).

D40 functions as the Nucleophile in the catalytic mechanism.

The protein belongs to the pseudouridine synthase TruB family. Type 1 subfamily.

It carries out the reaction uridine(55) in tRNA = pseudouridine(55) in tRNA. Responsible for synthesis of pseudouridine from uracil-55 in the psi GC loop of transfer RNAs. In Halalkalibacterium halodurans (strain ATCC BAA-125 / DSM 18197 / FERM 7344 / JCM 9153 / C-125) (Bacillus halodurans), this protein is tRNA pseudouridine synthase B.